A 1930-amino-acid polypeptide reads, in one-letter code: Ankyrin repeat domain-containing protein SAT10 (1930 aa).

ANK repeat units lie at residues 840–872 (FRHT…DLEE), 878–908 (GTWN…GVLN), 920–949 (SGNT…MRGY), 959–989 (QRSS…DYSK), 993–1023 (NGAS…FSNE), 1073–1102 (SGLT…DANG), 1106–1135 (EFEA…TKTE), 1144–1174 (GRTR…QLSH), 1178–1205 (NQRT…ETET), 1206–1235 (GLQE…EINA), 1239–1268 (YGNT…RLDL), 1272–1301 (DNVN…DVNA), 1304–1333 (GGDT…KFIL), 1339–1368 (RFEN…ERDL), 1400–1429 (SGWT…GRAA), 1514–1543 (QNML…SLTP), 1548–1577 (RHGT…MLAD), 1615–1644 (MGRN…NEDL), 1651–1680 (DGWT…KIFD), and 1696–1724 (KTWT…TTSD).

The protein operates within mycotoxin biosynthesis. Ankyrin repeat domain-containing protein; part of the satratoxin SC1 cluster involved in the biosynthesis of satratoxins, trichothecene mycotoxins that are associated with human food poisonings. Satratoxins are suggested to be made by products of multiple gene clusters (SC1, SC2 and SC3) that encode 21 proteins in all, including polyketide synthases, acetyltransferases, and other enzymes expected to modify the trichothecene skeleton. SC1 encodes 10 proteins, SAT1 to SAT10. The largest are SAT8, which encodes a putative polyketide synthase (PKS) with a conventional non-reducing architecture, and SAT10, a putative protein containing four ankyrin repeats and thus may be involved in protein scaffolding. The putative short-chain reductase SAT3 may assist the PKS in some capacity. SAT6 contains a secretory lipase domain and acts probably as a trichothecene esterase. SAT5 encodes a putative acetyltransferase, and so, with SAT6, may affect endogenous protection from toxicity. The probable transcription factor SAT9 may regulate the expression of the SC1 cluster. SC2 encodes proteins SAT11 to SAT16, the largest of which encodes the putative reducing PKS SAT13. SAT11 is a cytochrome P450 monooxygenase, while SAT14 and SAT16 are probable acetyltransferases. The SC2 cluster may be regulated by the transcription factor SAT15. SC3 is a small cluster that encodes 5 proteins, SAT17 to SAT21. SAT21 is a putative MFS-type transporter which may have a role in exporting secondary metabolites. The four other proteins putatively encoded in SC3 include the taurine hydroxylase-like protein SAT17, the O-methyltransferase SAT18, the acetyltransferase SAT19, and the Cys6-type zinc finger SAT20, the latter being probably involved in regulation of SC3 expression. This Stachybotrys chartarum (strain CBS 109288 / IBT 7711) (Toxic black mold) protein is Ankyrin repeat domain-containing protein SAT10.